The chain runs to 393 residues: CCA-adding enzyme (393 aa).

G27 and R30 together coordinate ATP. The CTP site is built by G27 and R30. Mg(2+) contacts are provided by D40 and D42. ATP contacts are provided by R111, D154, R157, R160, and R163. CTP contacts are provided by R111, D154, R157, R160, and R163.

It belongs to the tRNA nucleotidyltransferase/poly(A) polymerase family. Bacterial CCA-adding enzyme type 3 subfamily. Homodimer. It depends on Mg(2+) as a cofactor.

The catalysed reaction is a tRNA precursor + 2 CTP + ATP = a tRNA with a 3' CCA end + 3 diphosphate. It catalyses the reaction a tRNA with a 3' CCA end + 2 CTP + ATP = a tRNA with a 3' CCACCA end + 3 diphosphate. Its function is as follows. Catalyzes the addition and repair of the essential 3'-terminal CCA sequence in tRNAs without using a nucleic acid template. Adds these three nucleotides in the order of C, C, and A to the tRNA nucleotide-73, using CTP and ATP as substrates and producing inorganic pyrophosphate. tRNA 3'-terminal CCA addition is required both for tRNA processing and repair. Also involved in tRNA surveillance by mediating tandem CCA addition to generate a CCACCA at the 3' terminus of unstable tRNAs. While stable tRNAs receive only 3'-terminal CCA, unstable tRNAs are marked with CCACCA and rapidly degraded. The polypeptide is CCA-adding enzyme (Listeria innocua serovar 6a (strain ATCC BAA-680 / CLIP 11262)).